A 20-amino-acid polypeptide reads, in one-letter code: Alpha-1B-glycoprotein (20 aa).

The disordered stretch occupies residues 1-20; that stretch reads AVVFDPQPALWAEADTQLEP.

Interacts with CRISP3. Glycosylated. Plasma.

It localises to the secreted. The chain is Alpha-1B-glycoprotein (A1BG) from Equus asinus (Donkey).